A 233-amino-acid chain; its full sequence is Protein YIPF6 (233 aa).

At 1–84 the chain is on the cytoplasmic side; it reads MAETEGFGDS…PKKSTTLLRD (84 aa). Residues 85-105 traverse the membrane as a helical segment; that stretch reads WDLWGPLVLCVSLALMLQGGN. Residues 106-111 are Lumenal-facing; that stretch reads ADSKDD. Residues 112 to 132 form a helical membrane-spanning segment; the sequence is GGPQFAEVFVIIWFGAVVITL. The Cytoplasmic portion of the chain corresponds to 133 to 142; the sequence is NSKLLGGTIS. The helical transmembrane segment at 143–163 threads the bilayer; the sequence is FFQSLCVLGYCILPLTVAMLV. Residues 164–180 are Lumenal-facing; sequence CRLVLLLSHTTASFIVR. Residues 181–201 form a helical membrane-spanning segment; it reads LVVVTVMFAWSTFASTAFLAD. The Cytoplasmic segment spans residues 202–208; that stretch reads SQPPNRR. A helical transmembrane segment spans residues 209 to 229; it reads ALAVYPIFLFYFVISWMVLTF. At 230-233 the chain is on the lumenal side; that stretch reads NTVS.

This sequence belongs to the YIP1 family.

It is found in the golgi apparatus membrane. This is Protein YIPF6 (yipf6) from Xenopus tropicalis (Western clawed frog).